The primary structure comprises 754 residues: Fibronectin type III domain-containing protein 1 (754 aa).

Positions Met-1–Gly-19 are cleaved as a signal peptide. Disordered stretches follow at residues Ser-40–Gly-61, Ala-85–Ser-106, and Ala-130–Gly-163. Over residues Ala-130 to Gln-161 the composition is skewed to low complexity. 5 Fibronectin type-III domains span residues Pro-250 to Leu-355, Ala-359 to Phe-449, Ala-453 to Asp-545, Glu-549 to Pro-642, and Leu-645 to Gly-742. The disordered stretch occupies residues Ser-731 to Ile-754.

Prismatic layer of shell (at protein level). Expressed primarily in the mantle with highest level in the outer epithelium of the mantle edge and lower level in the mantle pallium.

It is found in the secreted. The chain is Fibronectin type III domain-containing protein 1 from Margaritifera margaritifera (Freshwater pearl mussel).